The following is a 165-amino-acid chain: Phosphopantetheine adenylyltransferase (165 aa).

Thr-9 is a substrate binding site. ATP-binding positions include 9-10 (TF) and His-17. Substrate is bound by residues Lys-41, Leu-78, and Arg-92. ATP is bound by residues 93 to 95 (GLR), Glu-103, and 128 to 134 (RQAIASK).

Belongs to the bacterial CoaD family. Homohexamer. Mg(2+) serves as cofactor.

It is found in the cytoplasm. It carries out the reaction (R)-4'-phosphopantetheine + ATP + H(+) = 3'-dephospho-CoA + diphosphate. Its pathway is cofactor biosynthesis; coenzyme A biosynthesis; CoA from (R)-pantothenate: step 4/5. Reversibly transfers an adenylyl group from ATP to 4'-phosphopantetheine, yielding dephospho-CoA (dPCoA) and pyrophosphate. The polypeptide is Phosphopantetheine adenylyltransferase (Ruegeria pomeroyi (strain ATCC 700808 / DSM 15171 / DSS-3) (Silicibacter pomeroyi)).